An 804-amino-acid polypeptide reads, in one-letter code: Leucine--tRNA ligase (804 aa).

Positions 39-50 (PYPSGKGLHVGH) match the 'HIGH' region motif. Residues 573–577 (KMSKS) carry the 'KMSKS' region motif. K576 contacts ATP.

It belongs to the class-I aminoacyl-tRNA synthetase family.

The protein localises to the cytoplasm. It carries out the reaction tRNA(Leu) + L-leucine + ATP = L-leucyl-tRNA(Leu) + AMP + diphosphate. This is Leucine--tRNA ligase from Lactobacillus delbrueckii subsp. bulgaricus (strain ATCC 11842 / DSM 20081 / BCRC 10696 / JCM 1002 / NBRC 13953 / NCIMB 11778 / NCTC 12712 / WDCM 00102 / Lb 14).